A 169-amino-acid polypeptide reads, in one-letter code: ATP synthase subunit b (169 aa).

A helical transmembrane segment spans residues 12-32 (PSVGLIFWKTVAFLIFLYILY). Positions 69-107 (AENEEARREAEQKAQQILREARDSAEELREEEKAKTRRE) are disordered. Residues 87–107 (REARDSAEELREEEKAKTRRE) are compositionally biased toward basic and acidic residues.

This sequence belongs to the ATPase B chain family. As to quaternary structure, F-type ATPases have 2 components, F(1) - the catalytic core - and F(0) - the membrane proton channel. F(1) has five subunits: alpha(3), beta(3), gamma(1), delta(1), epsilon(1). F(0) has three main subunits: a(1), b(2) and c(10-14). The alpha and beta chains form an alternating ring which encloses part of the gamma chain. F(1) is attached to F(0) by a central stalk formed by the gamma and epsilon chains, while a peripheral stalk is formed by the delta and b chains.

It localises to the cell inner membrane. In terms of biological role, f(1)F(0) ATP synthase produces ATP from ADP in the presence of a proton or sodium gradient. F-type ATPases consist of two structural domains, F(1) containing the extramembraneous catalytic core and F(0) containing the membrane proton channel, linked together by a central stalk and a peripheral stalk. During catalysis, ATP synthesis in the catalytic domain of F(1) is coupled via a rotary mechanism of the central stalk subunits to proton translocation. Its function is as follows. Component of the F(0) channel, it forms part of the peripheral stalk, linking F(1) to F(0). In Salinibacter ruber (strain DSM 13855 / M31), this protein is ATP synthase subunit b.